The primary structure comprises 425 residues: Putative nucleoside transporter YegT (425 aa).

Residues 1-8 (MKTTAKLS) are Periplasmic-facing. A helical membrane pass occupies residues 9-29 (FMMFVEWFIWGAWFVPLWLWL). Residues 30–38 (SKSGFSAGE) are Cytoplasmic-facing. The chain crosses the membrane as a helical span at residues 39-59 (IGWSYACTAIAAILSPILVGS). Topologically, residues 60–63 (ITDR) are periplasmic. A helical transmembrane segment spans residues 64–84 (FFSAQKVLAVLMFAGALLMYF). Residues 85–90 (AAQQTT) are Cytoplasmic-facing. Residues 91-111 (FAGFFPLLLAYSLTYMPTIAL) traverse the membrane as a helical segment. Topologically, residues 112-131 (TNSIAFANVPDVERDFPRIR) are periplasmic. A helical transmembrane segment spans residues 132 to 152 (VMGTIGWIASGLACGFLPQIL). At 153 to 161 (GYADISPTN) the chain is on the cytoplasmic side. A helical membrane pass occupies residues 162–182 (IPLLITAGSSALLGVFAFFLP). Over 183-210 (DTPPKSTGKMDIKVMLGLDALILLRDKN) the chain is Periplasmic. The chain crosses the membrane as a helical span at residues 211 to 231 (FLVFFFCSFLFAMPLAFYYIF). Over 232 to 244 (ANGYLTEVGMKNA) the chain is Cytoplasmic. Residues 245-265 (TGWMTLGQFSEIFFMLALPFF) traverse the membrane as a helical segment. At 266–287 (TKRFGIKKVLLLGLVTAAIRYG) the chain is on the periplasmic side. A helical membrane pass occupies residues 288 to 308 (FFIYGSADEYFTYALLFLGIL). The Cytoplasmic portion of the chain corresponds to 309-339 (LHGVSYDFYYVTAYIYVDKKAPVHMRTAAQG). Residues 340–360 (LITLCCQGFGSLLGYRLGGVM) form a helical membrane-spanning segment. Residues 361-379 (MEKMFAYQEPVNGLTFNWS) are Periplasmic-facing. The helical transmembrane segment at 380 to 400 (GMWTFGAVMIAIIAVLFMIFF) threads the bilayer. Residues 401 to 425 (RESDNEITAIKVDDRDIALTQGEVK) are Cytoplasmic-facing.

The protein belongs to the major facilitator superfamily. Nucleoside:H(+) symporter (NHS) (TC 2.A.1.10) family.

The protein resides in the cell inner membrane. Could be involved in nucleoside transport. This Escherichia coli (strain K12) protein is Putative nucleoside transporter YegT (yegT).